The following is a 1230-amino-acid chain: Basic-leucine zipper transcription factor A (1230 aa).

4 disordered regions span residues 65 to 108 (LYLS…NIIN), 180 to 233 (LNGN…QQHQ), 270 to 310 (QQLK…PSTQ), and 422 to 578 (HQQN…RKKD). Composition is skewed to low complexity over residues 69–108 (NSSN…NIIN), 192–233 (NNFS…QQHQ), 270–287 (QQLK…SPQP), 295–310 (PSLQ…PSTQ), and 422–447 (HQQN…QQQH). Composition is skewed to polar residues over residues 448–458 (KSTPPTQNTPP) and 466–475 (TPTLTTNGKG). A compositionally biased stretch (low complexity) spans 476 to 503 (SKSTPPTTTTTTTTTTSSSSSSSSSSSS). Residues 523–537 (PHHHHHHHNNHHHHH) show a composition bias toward basic residues. Residues 541–554 (FSDENDEEFIDENE) show a composition bias toward acidic residues. The 64-residue stretch at 555–618 (DKSKNKSRSS…LGDVMRPDFD (64 aa)) folds into the bZIP domain. Positions 556 to 586 (KSKNKSRSSQNIASRNYRQRKKDHISEVEFK) are basic motif. Residues 562–571 (RSSQNIASRN) are compositionally biased toward polar residues. Residues 590–604 (LSLENERLKQENHLL) are leucine-zipper. A coiled-coil region spans residues 728–753 (LKIDMELRTERDQLDREIKELFLKKI). Disordered stretches follow at residues 772 to 869 (TFNS…EHNK) and 1025 to 1230 (NYTN…TPNI). Composition is skewed to low complexity over residues 774 to 803 (NSES…IITP) and 810 to 831 (NNQN…SNNN). Over residues 832-845 (SHHHHHHHHSHLHG) the composition is skewed to basic residues. Residues 1025 to 1042 (NYTNSPLITSSPSQLTPN) show a composition bias toward polar residues. Low complexity-rich tracts occupy residues 1052-1146 (NNNN…NNGN) and 1153-1193 (QALH…SPSS).

This sequence belongs to the bZIP family. In terms of assembly, binds DNA as a dimer. Heterodimerizes with dimB; in vitro. Also able to form homodimer; in vitro.

It localises to the nucleus. Transcriptional regulator involved in DIF-1 signaling. DIF-1 (Differentiation Inducing Factor-1) is a signal molecule involved in the differentiation of pstO (prestalk-O) cells. Functions both as an activator of prestalk gene expression and a repressor of prespore gene expression. This Dictyostelium discoideum (Social amoeba) protein is Basic-leucine zipper transcription factor A (dimA).